The chain runs to 698 residues: MQPTATMATAAATTATVALTTSWDNATSRPTAEPDPILDNYVLLVVVMSLFVGGTLVVLSGVLLLCKRCWEVHQRFNRAMEEAEKTTTTYLDNGTHPIQDPDCRGEDPEGQDTETERFLATSSTGRRVSFNEAALFEQSRKAQDKGRRYTLTEGDFHHLKNARLTHLHLPPLKIATIHECDSGEASAAATPHPATTSKDSLAIFQPPGKTLTGHSVGPSSALPGGPYNSVDFSEISPSTSSDSGEGISLDAGTRGAKAAGPETVPGEMGTGSSGSGTVLQFFTRLRRHASLDGASPYFKVKKWKLEPSQRASSLDTRGSPKRHHFQRQRAASESMEQEGDVPHADFIQYIASAGDSVAFPPPRPFLASPTSPPPTLGRLEAAEAAGGASPETPPEHGISLGPEHAQQQDPQQEQDAEHAQCSYRDLWSLRASLELHAATASDHSSSGNDRDSVRSGDSSGSGSGGGGAAPAFPPPPESPPALRPKDGEARRLLQMDSGYASIEGRGAGDEVSELPAPARSPPRSPRAWPRRPRRDYSIDEKTDALFHEFLRHDPHFDDAPRHRTRAHPHTHARKQWQQRGRQHSDPGGARAATPPGVARPTRAPLRRGDSVDCPPEGRALPITGDDPSIPVIEEEPGGGGGGCPGSGLCVEPAGALLDKLAASLDERLFSPRLAEPVASSQVLIVAAAAPTSPDHSPA.

The Extracellular segment spans residues 1-41 (MQPTATMATAAATTATVALTTSWDNATSRPTAEPDPILDNY). A glycan (N-linked (GlcNAc...) asparagine) is linked at N25. A helical; Signal-anchor for type III membrane protein transmembrane segment spans residues 42-62 (VLLVVVMSLFVGGTLVVLSGV). Over 63–698 (LLLCKRCWEV…APTSPDHSPA (636 aa)) the chain is Cytoplasmic. 2 disordered regions span residues 90–124 (YLDNGTHPIQDPDCRGEDPEGQDTETERFLATSST) and 185–275 (ASAA…SSGS). Over residues 185–197 (ASAAATPHPATTS) the composition is skewed to low complexity. A phosphoserine mark is found at S290 and S295. Disordered regions lie at residues 308–339 (SQRASSLDTRGSPKRHHFQRQRAASESMEQEG), 360–421 (PPPR…HAQC), 438–536 (ATAS…RRDY), and 554–648 (PHFD…GSGL). A compositionally biased stretch (pro residues) spans 360–375 (PPPRPFLASPTSPPPT). The span at 402-413 (PEHAQQQDPQQE) shows a compositional bias: low complexity. A compositionally biased stretch (gly residues) spans 459–468 (SGSGSGGGGA). A compositionally biased stretch (pro residues) spans 471–482 (AFPPPPESPPAL). Basic and acidic residues predominate over residues 483 to 493 (RPKDGEARRLL). Residues S501, S520, and S524 each carry the phosphoserine modification. A compositionally biased stretch (basic residues) spans 562-576 (HRTRAHPHTHARKQW). Position 610 is a phosphoserine (S610). T691 is modified (phosphothreonine). Residues S692 and S696 each carry the phosphoserine modification.

Interacts with voltage-dependent calcium channels CACNB1, CACNB2, CACNB3 and CACNB4 beta subunits; prevents their interaction with the CACNA1C alpha subunit thereby negatively regulating the activity of the corresponding calcium channels. In terms of tissue distribution, expressed by neurons in the cortex, cerebellum and hippocampus and by pancreatic beta cells (at protein level).

The protein localises to the cytoplasmic vesicle. It localises to the secretory vesicle. The protein resides in the synaptic vesicle membrane. Its subcellular location is the cell membrane. It is found in the cell projection. The protein localises to the growth cone. Functionally, negatively regulates voltage-gated calcium channels by preventing the interaction between their alpha and beta subunits. Thereby, negatively regulates calcium channels activity at the plasma membrane and indirectly inhibits calcium-regulated exocytosis. This chain is Voltage-dependent calcium channel beta subunit-associated regulatory protein, found in Mus musculus (Mouse).